The primary structure comprises 136 residues: uncharacterized protein (136 aa).

Residues 74 to 97 form a disordered region; the sequence is RADPGRKGRTQPLPTQGSARRFLH.

This is an uncharacterized protein from Saccharomyces cerevisiae (strain ATCC 204508 / S288c) (Baker's yeast).